Consider the following 219-residue polypeptide: MDGLVGRKLGMTRIINEEGIMIAVTMIEILPHYVTQVKNKEKDGYCAVQVTTGNTRDKCLNKPKLGHLKKLGINYGKGLWEFRLNDSNRLISVGDIFTLKVLKCINKVDVTGISKGKGFAGAVKRWNFRTQDASHGNSLSHRAPGSIGQNQTPGKVFKGKKMAGHLGYEKATIQNLAVINIDIKNNLLLVKGAIPGVIGENVIVKRSVKIGYFKEMSSI.

Gln-151 is modified (N5-methylglutamine).

Belongs to the universal ribosomal protein uL3 family. In terms of assembly, part of the 50S ribosomal subunit. Forms a cluster with proteins L14 and L19. Post-translationally, methylated by PrmB.

Its function is as follows. One of the primary rRNA binding proteins, it binds directly near the 3'-end of the 23S rRNA, where it nucleates assembly of the 50S subunit. The protein is Large ribosomal subunit protein uL3 of Blochmanniella floridana.